The primary structure comprises 66 residues: Large ribosomal subunit protein bL33c (66 aa).

Belongs to the bacterial ribosomal protein bL33 family.

The protein resides in the plastid. It localises to the chloroplast. This is Large ribosomal subunit protein bL33c from Lobularia maritima (Sweet alyssum).